We begin with the raw amino-acid sequence, 757 residues long: RNA-directed RNA polymerase catalytic subunit (757 aa).

Positions 50-82 (SEKGKWTTNTETGAPQLNPIDGPLPEDNEPSGY) are disordered. The span at 55–64 (WTTNTETGAP) shows a compositional bias: polar residues. 2 short sequence motifs (nuclear localization signal) span residues 187-195 (RKRRVRDNM) and 203-216 (RTIG…NKRS). The promoter-binding site stretch occupies residues 249–256 (RGFVYFVE). The RdRp catalytic domain occupies 286-483 (VRKMMTNSQD…GINMSKKKSY (198 aa)).

Belongs to the influenza viruses polymerase PB1 family. In terms of assembly, influenza RNA polymerase is composed of three subunits: PB1, PB2 and PA. Interacts (via N-terminus) with PA (via C-terminus). Interacts (via C-terminus) with PB2 (via N-terminus); this interaction is essential for transcription initiation. In terms of processing, phosphorylated by host PRKCA.

Its subcellular location is the host nucleus. It is found in the host cytoplasm. It catalyses the reaction RNA(n) + a ribonucleoside 5'-triphosphate = RNA(n+1) + diphosphate. In terms of biological role, RNA-dependent RNA polymerase which is responsible for replication and transcription of virus RNA segments. The transcription of viral mRNAs occurs by a unique mechanism called cap-snatching. 5' methylated caps of cellular mRNAs are cleaved after 10-13 nucleotides by PA. In turn, these short capped RNAs are used as primers by PB1 for transcription of viral mRNAs. During virus replication, PB1 initiates RNA synthesis and copy vRNA into complementary RNA (cRNA) which in turn serves as a template for the production of more vRNAs. This Influenza A virus (strain A/Turkey/Minnesota/501/1978 H6N8) protein is RNA-directed RNA polymerase catalytic subunit.